The sequence spans 35 residues: Mu-theraphotoxin-Hhn1a (35 aa).

Disulfide bonds link cysteine 2/cysteine 17, cysteine 9/cysteine 24, and cysteine 16/cysteine 31.

Belongs to the neurotoxin 10 (Hwtx-1) family. 22 (Htx-4) subfamily. In terms of assembly, monomer. Expressed by the venom gland.

It localises to the secreted. Functionally, inhibits selectively tetrodotoxin-sensitive voltage-gated sodium channels (Nav). Does not act by binding to receptor site 3 to slow the inactivation kinetics of sodium currents. The sequence is that of Mu-theraphotoxin-Hhn1a from Cyriopagopus hainanus (Chinese bird spider).